We begin with the raw amino-acid sequence, 807 residues long: Spondin-1 (807 aa).

An N-terminal signal peptide occupies residues 1 to 28 (MRLSPVLLRLSRGPALLALALPLAVALA). Positions 29-194 (FSDETLDKVP…DSTFDGVTDK (166 aa)) constitute a Reelin domain. 17 disulfide bridges follow: Cys44–Cys128, Cys156–Cys182, Cys199–Cys336, Cys200–Cys340, Cys202–Cys415, Cys443–Cys480, Cys454–Cys489, Cys459–Cys494, Cys502–Cys538, Cys513–Cys517, Cys548–Cys554, Cys559–Cys595, Cys570–Cys574, Cys605–Cys610, Cys615–Cys650, Cys626–Cys630, and Cys660–Cys665. Residues 195–388 (PILDCCACGT…LTSLDHPQSP (194 aa)) form the Spondin domain. Asn214 carries an N-linked (GlcNAc...) asparagine glycan. Ca(2+) contacts are provided by Asp325, Asp354, and Asp358. TSP type-1 domains are found at residues 442–495 (TCIY…PGCS), 501–555 (TCTM…EECS), 558–611 (SCLT…PECH), 614–666 (PCLL…PECP), 668–721 (DCEL…RKCL), and 754–806 (GCRM…NVHP). N-linked (GlcNAc...) asparagine glycosylation is present at Asn681.

Binds to the central extracellular domain of APP and inhibits beta-secretase cleavage of APP.

The protein resides in the secreted. The protein localises to the extracellular space. It is found in the extracellular matrix. Cell adhesion protein that promotes the attachment of spinal cord and sensory neuron cells and the outgrowth of neurites in vitro. May contribute to the growth and guidance of axons in both the spinal cord and the PNS. Major factor for vascular smooth muscle cell. The polypeptide is Spondin-1 (SPON1) (Bos taurus (Bovine)).